A 355-amino-acid polypeptide reads, in one-letter code: Protein-glutamate methylesterase/protein-glutamine glutaminase (355 aa).

The Response regulatory domain maps to A7 to E123. D57 is subject to 4-aspartylphosphate. A disordered region spans residues T139–A159. The 195-residue stretch at E161–E355 folds into the CheB-type methylesterase domain. Catalysis depends on residues S173, H200, and D297.

It belongs to the CheB family. Phosphorylated by CheA. Phosphorylation of the N-terminal regulatory domain activates the methylesterase activity.

The protein localises to the cytoplasm. The enzyme catalyses [protein]-L-glutamate 5-O-methyl ester + H2O = L-glutamyl-[protein] + methanol + H(+). The catalysed reaction is L-glutaminyl-[protein] + H2O = L-glutamyl-[protein] + NH4(+). Functionally, involved in chemotaxis. Part of a chemotaxis signal transduction system that modulates chemotaxis in response to various stimuli. Catalyzes the demethylation of specific methylglutamate residues introduced into the chemoreceptors (methyl-accepting chemotaxis proteins or MCP) by CheR. Also mediates the irreversible deamidation of specific glutamine residues to glutamic acid. The protein is Protein-glutamate methylesterase/protein-glutamine glutaminase of Natronomonas pharaonis (strain ATCC 35678 / DSM 2160 / CIP 103997 / JCM 8858 / NBRC 14720 / NCIMB 2260 / Gabara) (Halobacterium pharaonis).